A 611-amino-acid chain; its full sequence is Sodium-coupled monocarboxylate transporter 1 (611 aa).

Topologically, residues 1 to 9 are extracellular; that stretch reads MDASRDIGS. Residues 10–30 traverse the membrane as a helical segment; it reads FVVWDYVVFAGMLLISAAIGI. Residues 31 to 51 lie on the Cytoplasmic side of the membrane; sequence YYAFAGGGQQTSKDFLMGGRS. The chain crosses the membrane as a helical span at residues 52–72; the sequence is MSAVPVALSLTASFMSAVTVL. Residues 73 to 86 lie on the Extracellular side of the membrane; the sequence is GTPAEVYRFGAIFS. A helical membrane pass occupies residues 87–107; sequence IFVITYFFVVVISAEVFLPVF. At 108-132 the chain is on the cytoplasmic side; that stretch reads YRLGITSTYEYLELRFNRCIRLCGT. A helical transmembrane segment spans residues 133 to 153; the sequence is ILFIVQTILYTGIVIYAPALA. The Extracellular segment spans residues 154–161; sequence LNQVTGFD. The helical transmembrane segment at 162–182 threads the bilayer; that stretch reads LWGAVVATGVVCTFYCTLGGL. Topologically, residues 183–184 are cytoplasmic; the sequence is KA. A helical transmembrane segment spans residues 185–205; it reads VVWTDVFQVGIMVAGFASVII. Residues 206–239 lie on the Extracellular side of the membrane; the sequence is QASITQHGINKILSDAFNGGRLNFWNFDPNPLQR. Residues 240–260 form a helical membrane-spanning segment; the sequence is HTFWTIVIGGTFTWTTIYGVN. The Cytoplasmic segment spans residues 261 to 279; the sequence is QSQVQRYISCKSRLHAKLS. A helical transmembrane segment spans residues 280 to 300; that stretch reads LYVNLVGLWVILTCSIFCGLA. Residues 301–336 lie on the Extracellular side of the membrane; the sequence is LYSRYRECDPWTSKKVSAIDQLMPYLVLDILKNYPG. A helical transmembrane segment spans residues 337 to 359; it reads VPGLFVACAYSGTLSTVSSSINA. Over 360–389 the chain is Cytoplasmic; it reads LAAVTVEDLIKPRFKSLSEKSLSWISQGMS. A helical membrane pass occupies residues 390-410; sequence VLYGALCIGMAALASLMGALL. Residues 411–415 lie on the Extracellular side of the membrane; that stretch reads QAALS. Residues 416–436 traverse the membrane as a helical segment; sequence IFGMVGGPLLGLFSLGILVPF. At 437–439 the chain is on the cytoplasmic side; the sequence is ANS. Residues 440 to 460 form a helical membrane-spanning segment; that stretch reads IGALTGLLAGFAISLWVGIGA. At 461–518 the chain is on the extracellular side; it reads QLYPPLPERTLPLPLETYGCNITHNGSDWMSTTEMPFSTSAFQIHNAERTPLMDNWYS. Asparagine 485 carries N-linked (GlcNAc...) asparagine glycosylation. Residues 519 to 539 form a helical membrane-spanning segment; it reads LSYLYFSTIGTLTTLFVGILI. Residues 540–611 are Cytoplasmic-facing; the sequence is SLSTGGRKQN…HSGKINGTRL (72 aa). Positions 609–611 match the PDZ-binding motif; sequence TRL.

The protein belongs to the sodium:solute symporter (SSF) (TC 2.A.21) family. Interacts (via PDZ-binding motif) with PDZK1 (via PDZ domains 1 and 3); interaction increases nicotinate transport activity of SLC5A8. As to expression, expressed in brain, colon, kidney and in the ileum and jejunum of small intestine. In the kidney, expression occurred in the proximal tubule and the loop of Henle, being restricted to tubular epithelial cells in both the cortex and the medulla. In the colon, predominantly expressed in the distal half of the large bowel and in the most terminal ileum. Localized selectively in the luminal surface of crypts in the large intestine and to the brush border in the middle parts of crypts in the cecum. In the brain, expression was seen throughout, exclusively in neurons, including the cortex, hippocampus, cerebellum and pituitary gland (at protein level). Expression is reduced in oligodendrogliomas.

The protein localises to the apical cell membrane. The enzyme catalyses (S)-lactate(out) + 2 Na(+)(out) = (S)-lactate(in) + 2 Na(+)(in). The catalysed reaction is propanoate(out) + 2 Na(+)(out) = propanoate(in) + 2 Na(+)(in). It carries out the reaction pyruvate(out) + 2 Na(+)(out) = pyruvate(in) + 2 Na(+)(in). It catalyses the reaction acetate(out) + 2 Na(+)(out) = acetate(in) + 2 Na(+)(in). The enzyme catalyses butanoate(out) + 2 Na(+)(out) = butanoate(in) + 2 Na(+)(in). The catalysed reaction is nicotinate(out) + 2 Na(+)(out) = nicotinate(in) + 2 Na(+)(in). It carries out the reaction (R)-3-hydroxybutanoate(out) + 2 Na(+)(out) = (R)-3-hydroxybutanoate(in) + 2 Na(+)(in). It catalyses the reaction acetoacetate(out) + 2 Na(+)(out) = acetoacetate(in) + 2 Na(+)(in). The enzyme catalyses 4-methyl-2-oxopentanoate(out) + 2 Na(+)(out) = 4-methyl-2-oxopentanoate(in) + 2 Na(+)(in). The catalysed reaction is 5-oxo-L-proline(out) + 2 Na(+)(out) = 5-oxo-L-proline(in) + 2 Na(+)(in). It carries out the reaction iodide(out) = iodide(in). It catalyses the reaction chloride(in) = chloride(out). The enzyme catalyses nitrate(in) = nitrate(out). The catalysed reaction is bromide(in) = bromide(out). Its activity is regulated as follows. Transport of D-lactate and pyruvate stimulated by alpha-cyano-4-hydroxycinnamic acid, but inhibited by the short-chain fatty acids acetate, propionate and butyrate. Functionally, acts as an electrogenic sodium (Na(+)) and chloride (Cl-)-dependent sodium-coupled solute transporter, including transport of monocarboxylates (short-chain fatty acids including L-lactate, D-lactate, pyruvate, acetate, propionate, valerate and butyrate), mocarboxylate drugs (nicotinate, benzoate, salicylate and 5-aminosalicylate) and ketone bodies (beta-D-hydroxybutyrate, acetoacetate and alpha-ketoisocaproate), with a Na(+):substrate stoichiometry of between 4:1 and 2:1. Catalyzes passive carrier mediated diffusion of iodide. Mediates iodide transport from the thyrocyte into the colloid lumen through the apical membrane. May be responsible for the absorption of D-lactate and monocarboxylate drugs from the intestinal tract. May play a critical role in the entry of L-lactate and ketone bodies into neurons by a process driven by an electrochemical Na(+) gradient and hence contribute to the maintenance of the energy status and function of neurons. Mediates sodium-coupled electrogenic transport of pyroglutamate (5-oxo-L-proline). Can mediate the transport of chloride, bromide, iodide and nitrate ions when external concentration of sodium ions is reduced. In Mus musculus (Mouse), this protein is Sodium-coupled monocarboxylate transporter 1.